A 103-amino-acid chain; its full sequence is Cyanovirin-N homolog (103 aa).

Belongs to the cyanovirin-N family.

Its function is as follows. Mannose-binding lectin. The protein is Cyanovirin-N homolog of Tuber borchii (White truffle).